A 205-amino-acid chain; its full sequence is Rho-related GTP-binding protein RhoQ (205 aa).

Residue 16-23 (GDGAVGKT) participates in GTP binding. The Effector region signature appears at 38 to 46 (YVPTVFDHY). Residues 63–67 (DTAGQ) and 121–124 (TQID) each bind GTP. Cys-202 is modified (cysteine methyl ester). Cys-202 carries S-farnesyl cysteine lipidation. Residues 203 to 205 (LIT) constitute a propeptide, removed in mature form.

The protein belongs to the small GTPase superfamily. Rho family. In terms of assembly, interacts with CDC42EP4 in a GTP-dependent manner. Interacts with ARHGAP33/TCGAP. Interacts with CDC42EP1, CDC42EP2, CDC42EP3, PARD6A, PARD6G (and probably PARD6B) in a GTP-dependent manner. Part of a quaternary complex containing PARD3, some PARD6 protein (PARD6A, PARD6B or PARD6G) and some atypical PKC protein (PRKCI or PRKCZ). Interacts with EXO70 in a GTP-dependent manner. Interacts with GOPC. May be post-translationally modified by both palmitoylation and polyisoprenylation.

The protein localises to the cytoplasm. It is found in the cell membrane. With respect to regulation, regulated by guanine nucleotide exchange factors (GEFs) which promote the exchange of bound GDP for free GTP, GTPase activating proteins (GAPs) which increase the GTP hydrolysis activity, and GDP dissociation inhibitors which inhibit the dissociation of the nucleotide from the GTPase. Its function is as follows. Plasma membrane-associated small GTPase which cycles between an active GTP-bound and an inactive GDP-bound state. In active state binds to a variety of effector proteins to regulate cellular responses. Involved in epithelial cell polarization processes. May play a role in CFTR trafficking to the plasma membrane. Causes the formation of thin, actin-rich surface projections called filopodia. In Homo sapiens (Human), this protein is Rho-related GTP-binding protein RhoQ (RHOQ).